A 318-amino-acid chain; its full sequence is Glycine--tRNA ligase alpha subunit (318 aa).

This sequence belongs to the class-II aminoacyl-tRNA synthetase family. Tetramer of two alpha and two beta subunits.

It localises to the cytoplasm. The enzyme catalyses tRNA(Gly) + glycine + ATP = glycyl-tRNA(Gly) + AMP + diphosphate. The sequence is that of Glycine--tRNA ligase alpha subunit (glyQ) from Moraxella catarrhalis (Branhamella catarrhalis).